A 500-amino-acid polypeptide reads, in one-letter code: MQTSSSGYILALDLGTTGNRAFIFNNAGKIVAQAYKELTQHYPQPGWLEHDAEEIWQDTCWVMKTAIANAQISPSEIAAIGLTVQRETCLLWDKTTGKPLHKAIVWQDRRTAPLCHQLQEKGYAQEIYSRTGLVVDAYFSATKLRWLLDYITGVDLKNVLAGTIDTWILWKLTGGKVHATDHSNASRTMLMNLKTGEWDEQLLEILQIPAHILPQIQPSLGKFGLTDTSLLDTAIPITAILGDQQAALFGHGCDRPGLMKCTYGTGSFLVAHTGSNIVRSQHQLISTIAWTQYNSQENINIGYALEGSMFTSGACIQWLRDGIKLIKTAAETETMANQVDDNGGVYFVPAFSGLGAPYWDMNARGAFFGITASVQPQHLVRAVLEAIAYQVLEVVQAINASCSSPMQRLIVDGGACENNFLMQFQADVLGIPVERPTMRDTTVQGAAFAAGLAVGFWDSYTALVNQRQIDRIFEPGEGSQNAIYNFATWQKAVKRSLDWV.

Threonine 16 provides a ligand contact to ADP. ATP contacts are provided by threonine 16 and threonine 17. Threonine 16 is a binding site for sn-glycerol 3-phosphate. Arginine 20 lines the ADP pocket. The sn-glycerol 3-phosphate site is built by arginine 86, glutamate 87, tyrosine 138, and aspartate 243. Glycerol is bound by residues arginine 86, glutamate 87, tyrosine 138, aspartate 243, and glutamine 244. Threonine 265 and glycine 313 together coordinate ADP. ATP is bound by residues threonine 265, glycine 313, glutamine 317, and glycine 414. ADP contacts are provided by glycine 414 and asparagine 418.

Belongs to the FGGY kinase family.

It carries out the reaction glycerol + ATP = sn-glycerol 3-phosphate + ADP + H(+). The protein operates within polyol metabolism; glycerol degradation via glycerol kinase pathway; sn-glycerol 3-phosphate from glycerol: step 1/1. Its activity is regulated as follows. Inhibited by fructose 1,6-bisphosphate (FBP). Functionally, key enzyme in the regulation of glycerol uptake and metabolism. Catalyzes the phosphorylation of glycerol to yield sn-glycerol 3-phosphate. This chain is Glycerol kinase, found in Trichormus variabilis (strain ATCC 29413 / PCC 7937) (Anabaena variabilis).